Here is a 180-residue protein sequence, read N- to C-terminus: Signal peptidase complex subunit 3 (180 aa).

The Cytoplasmic portion of the chain corresponds to 1 to 12 (MHNLLSRANSLL). The helical; Signal-anchor for type II membrane protein transmembrane segment at 13–33 (AFTLWVMAAVTAACFLSTVFL) threads the bilayer. Residues 34–180 (DYTVSNHLEV…PTTYTTTRRS (147 aa)) lie on the Lumenal side of the membrane. N-linked (GlcNAc...) asparagine glycosylation is present at Asn141.

It belongs to the SPCS3 family. In terms of assembly, component of the signal peptidase complex (SPC) composed of a catalytic subunit sec-11 and three accessory subunits spcs-1, spcs-2 and spcs-3. The complex induces a local thinning of the ER membrane which is used to measure the length of the signal peptide (SP) h-region of protein substrates. This ensures the selectivity of the complex towards h-regions shorter than 18-20 amino acids.

The protein resides in the endoplasmic reticulum membrane. Its function is as follows. Essential component of the signal peptidase complex (SPC) which catalyzes the cleavage of N-terminal signal sequences from nascent proteins as they are translocated into the lumen of the endoplasmic reticulum. Essential for the SPC catalytic activity, possibly by stabilizing and positioning the active center of the complex close to the lumenal surface. The protein is Signal peptidase complex subunit 3 of Caenorhabditis briggsae.